A 330-amino-acid polypeptide reads, in one-letter code: ADP-L-glycero-D-manno-heptose-6-epimerase (330 aa).

NADP(+)-binding positions include 11 to 12, 32 to 33, Gln39, Gln54, 75 to 79, and Asn92; these read FI, DD, and QGACA. Tyr139 (proton acceptor) is an active-site residue. Residue Lys143 participates in NADP(+) binding. A substrate-binding site is contributed by Asn168. The NADP(+) site is built by Val169 and Lys177. Lys177 functions as the Proton acceptor in the catalytic mechanism. Residues Arg179, His186, 200–203, Arg213, and Tyr292 contribute to the substrate site; that span reads FGEH.

Belongs to the NAD(P)-dependent epimerase/dehydratase family. HldD subfamily. In terms of assembly, homopentamer. NADP(+) serves as cofactor.

It carries out the reaction ADP-D-glycero-beta-D-manno-heptose = ADP-L-glycero-beta-D-manno-heptose. It participates in nucleotide-sugar biosynthesis; ADP-L-glycero-beta-D-manno-heptose biosynthesis; ADP-L-glycero-beta-D-manno-heptose from D-glycero-beta-D-manno-heptose 7-phosphate: step 4/4. Its function is as follows. Catalyzes the interconversion between ADP-D-glycero-beta-D-manno-heptose and ADP-L-glycero-beta-D-manno-heptose via an epimerization at carbon 6 of the heptose. The chain is ADP-L-glycero-D-manno-heptose-6-epimerase from Pseudomonas aeruginosa (strain UCBPP-PA14).